The chain runs to 525 residues: Phosphatidylinositol 4-kinase alpha 2 (525 aa).

The segment at 163–278 (SDVRQHIVDG…VKPQACIFKV (116 aa)) is pleckstrin homology (PH) domain conferring phosphoinositide binding specificity. Residues 239 to 509 (VDSGIPLQSA…VCTDAYNKWT (271 aa)) form the PI3K/PI4K catalytic domain. The tract at residues 245–251 (LQSAAKV) is G-loop. Positions 373-381 (QPKDRHNGN) are catalytic loop. Residues 392 to 417 (HIDFGFILETSPGGNMRFENAHFKLS) form an activation loop region.

Belongs to the PI3/PI4-kinase family. Type III PI4K subfamily.

It localises to the membrane. It catalyses the reaction a 1,2-diacyl-sn-glycero-3-phospho-(1D-myo-inositol) + ATP = a 1,2-diacyl-sn-glycero-3-phospho-(1D-myo-inositol 4-phosphate) + ADP + H(+). Its function is as follows. Acts on phosphatidylinositol (PtdIns) in the first committed step in the production of the second messenger inositol-1,4,5,-trisphosphate. This chain is Phosphatidylinositol 4-kinase alpha 2 (PI4KA2), found in Arabidopsis thaliana (Mouse-ear cress).